Here is a 639-residue protein sequence, read N- to C-terminus: ADP-ribosylation factor-binding protein GGA1 (639 aa).

Residue Met-1 is modified to N-acetylmethionine. One can recognise a VHS domain in the interval 17–147 (ATNPLNKELD…MLKKQGIVKS (131 aa)). The segment at 114 to 274 (KILELLYSWT…RLASDTEDND (161 aa)) is interaction with ARF3. The region spanning 171 to 299 (DEEKSKMLAR…VINLYKQLVR (129 aa)) is the GAT domain. Ser-185 is subject to Phosphoserine. Residues 300–509 (GEEVNGDATA…ITVPLESIKP (210 aa)) form a unstructured hinge region. Disordered regions lie at residues 320 to 421 (LDLS…SGLD) and 434 to 492 (SLPP…QPVP). Ser-355 bears the Phosphoserine; by CK2 mark. The Autoinhibitory motif lies at 358 to 362 (DDELM). A compositionally biased stretch (polar residues) spans 381 to 390 (GWNSFQSSDA). At Ser-418 the chain carries Phosphoserine. The span at 462–480 (SSSCSSPSSSATSLLHTVS) shows a compositional bias: low complexity. A compositionally biased stretch (pro residues) spans 481–490 (PEPPRPPQQP). Positions 510–631 (SNILPVTVYD…NEMGDVDQFP (122 aa)) constitute a GAE domain.

It belongs to the GGA protein family. As to quaternary structure, monomer. Interacts with GGA2 and GGA3. Binds to clathrin and activated ARFs, including ARF1, ARF5 and ARF6. Interacts with RABEP1. Interacts with RABGEF1. Interacts with the type-I membrane proteins LRP3, M6PR/CD-MPR and IGF2R/CI-MPR. Interacts (via N-terminal VHS domain) with SORL1/sorLA and SORT1 (via C-terminal cytosolic domain). Interacts with EPN4. Interacts with CCDC91. Interacts with HEATR5B/p200a. Interacts with SYNRG/gamma-synergin. Interacts (via GAE doamin) with NECAP1 and NECAP2. Interacts (via GAE domain) with AFTPH/aftiphilin. Interacts with TSG101 and UBC. Interacts with RNF11. Interacts (via VHS domain) with BACE1 (via DXXLL motif); the interaction highly increases when BACE1 is phosphorylated at 'Ser-498'. Interacts with CNST. Interacts with ADRA2B. Interacts with ARL3; the interaction recruits, in collaboration with RABEP1, PKD1:PKD2 complex to trans-Golgi network and is required for ciliary targeting. In terms of processing, phosphorylated by CK2 and dephosphorylated by PP2A. Phosphorylation of GGA1 allows the internal DXXLL motif to bind the VHS domain and to inhibit the recognition of cargo signals. Ubiquitinated. Ubiquitously expressed.

Its subcellular location is the golgi apparatus. The protein localises to the trans-Golgi network membrane. It is found in the endosome membrane. The protein resides in the early endosome membrane. In terms of biological role, plays a role in protein sorting and trafficking between the trans-Golgi network (TGN) and endosomes. Mediates the ARF-dependent recruitment of clathrin to the TGN and binds ubiquitinated proteins and membrane cargo molecules with a cytosolic acidic cluster-dileucine (DXXLL) motif. Mediates export of the GPCR receptor ADRA2B to the cell surface. Required for targeting PKD1:PKD2 complex from the trans-Golgi network to the cilium membrane. Regulates retrograde transport of proteins such as phosphorylated form of BACE1 from endosomes to the trans-Golgi network. The polypeptide is ADP-ribosylation factor-binding protein GGA1 (GGA1) (Homo sapiens (Human)).